The primary structure comprises 916 residues: Extracellular signal-regulated kinase 7 (916 aa).

The Protein kinase domain maps to 25–319 (FDVRKRMGKG…AKEAIRHPYV (295 aa)). ATP contacts are provided by residues 31-39 (MGKGAYGIV) and Lys54. Asp149 serves as the catalytic Proton acceptor. Composition is skewed to polar residues over residues 364 to 376 (CSNRTVSNSTPSS) and 390 to 403 (QARTTSAKQPTTSP). Disordered regions lie at residues 364 to 419 (CSNR…TQSR), 452 to 477 (PPAAAPPAPAATAPAVPRKSGDKSVP), 588 to 608 (PSETEHRQQREERAYQRQMKR), 711 to 742 (KKLQRSKESDEKDEDDRRALPEGIGGPGSQNY), 792 to 813 (ELNPAPDSGGRDSGSEHSPGRD), and 883 to 916 (CRHRHHKPNHHAPYDHMRPTEDDIQEADSLPESN). Composition is skewed to basic and acidic residues over residues 590-608 (ETEHRQQREERAYQRQMKR), 715-730 (RSKESDEKDEDDRRAL), and 800-811 (GGRDSGSEHSPG). Residues 883–892 (CRHRHHKPNH) show a composition bias toward basic residues. Positions 894–903 (APYDHMRPTE) are enriched in basic and acidic residues.

This sequence belongs to the protein kinase superfamily. Ser/Thr protein kinase family.

It catalyses the reaction L-seryl-[protein] + ATP = O-phospho-L-seryl-[protein] + ADP + H(+). It carries out the reaction L-threonyl-[protein] + ATP = O-phospho-L-threonyl-[protein] + ADP + H(+). In terms of biological role, atypical MAPK protein that regulates protein secretion in a kinase activity-dependent manner. In response to starvation regulates protein secretion by mediating transitional endoplasmic reticulum site disassembly. Mediates inhibition of insulin-like peptide secretion upon disturbed ribosome biogenesis and acts as a downstream effector of TP53. In Drosophila melanogaster (Fruit fly), this protein is Extracellular signal-regulated kinase 7.